Consider the following 186-residue polypeptide: NADH dehydrogenase [ubiquinone] 1 beta subcomplex subunit 8, mitochondrial (186 aa).

Residues 1 to 28 (MAAARAGVLGVRWLQKAARNVVPLGART) constitute a mitochondrion transit peptide. A helical membrane pass occupies residues 133–153 (LFGFVAFMLFMFWVGETYPAY).

This sequence belongs to the complex I NDUFB8 subunit family. As to quaternary structure, complex I is composed of 45 different subunits.

The protein localises to the mitochondrion inner membrane. In terms of biological role, accessory subunit of the mitochondrial membrane respiratory chain NADH dehydrogenase (Complex I), that is believed not to be involved in catalysis. Complex I functions in the transfer of electrons from NADH to the respiratory chain. The immediate electron acceptor for the enzyme is believed to be ubiquinone. The chain is NADH dehydrogenase [ubiquinone] 1 beta subcomplex subunit 8, mitochondrial (NDUFB8) from Bos taurus (Bovine).